The following is a 244-amino-acid chain: Cobalt transport protein CbiM (244 aa).

The N-terminal stretch at 1–28 (MKKLWKFIPFVLMGVIYFTLTNPESAHA) is a signal peptide. Helical transmembrane passes span 37–57 (PVKWAVFWLIVFIPFLVLGLI), 71–91 (LLLALCAAFIFVLSALKIPSV), 103–123 (LATVMFGPLVVSVLGVIVLLF), 135–155 (TLGANAMSMAVIGPMVGFVVY), 166–186 (SVSIFLCAMTADLATYFTTSV), and 206–226 (FMAIFCVTQVPIAIAEGLLTV).

This sequence belongs to the CbiM family. Forms an energy-coupling factor (ECF) transporter complex composed of an ATP-binding protein (A component, CbiO), a transmembrane protein (T component, CbiQ) and 2 possible substrate-capture proteins (S components, CbiM and CbiN) of unknown stoichimetry.

The protein localises to the cell membrane. It functions in the pathway cofactor biosynthesis; adenosylcobalamin biosynthesis. In terms of biological role, part of the energy-coupling factor (ECF) transporter complex CbiMNOQ involved in cobalt import. This Listeria seeligeri serovar 1/2b (strain ATCC 35967 / DSM 20751 / CCM 3970 / CCUG 15530 / CIP 100100 / LMG 11386 / NCTC 11856 / SLCC 3954 / 1120) protein is Cobalt transport protein CbiM.